We begin with the raw amino-acid sequence, 469 residues long: Sulfate adenylyltransferase subunit 1 (469 aa).

In terms of domain architecture, tr-type G spans 22–238 (KQLLRFITCG…LETIKIDEDR (217 aa)). The segment at 31 to 38 (GSVDDGKS) is G1. 31–38 (GSVDDGKS) provides a ligand contact to GTP. The tract at residues 89 to 93 (GITID) is G2. Positions 110-113 (DTPG) are G3. Residues 110 to 114 (DTPGH) and 165 to 168 (NKMD) each bind GTP. Positions 165 to 168 (NKMD) are G4. A G5 region spans residues 203 to 205 (SAL).

This sequence belongs to the TRAFAC class translation factor GTPase superfamily. Classic translation factor GTPase family. CysN/NodQ subfamily. Heterodimer composed of CysD, the smaller subunit, and CysN.

It carries out the reaction sulfate + ATP + H(+) = adenosine 5'-phosphosulfate + diphosphate. Its pathway is sulfur metabolism; hydrogen sulfide biosynthesis; sulfite from sulfate: step 1/3. In terms of biological role, with CysD forms the ATP sulfurylase (ATPS) that catalyzes the adenylation of sulfate producing adenosine 5'-phosphosulfate (APS) and diphosphate, the first enzymatic step in sulfur assimilation pathway. APS synthesis involves the formation of a high-energy phosphoric-sulfuric acid anhydride bond driven by GTP hydrolysis by CysN coupled to ATP hydrolysis by CysD. The polypeptide is Sulfate adenylyltransferase subunit 1 (Aliarcobacter butzleri (strain RM4018) (Arcobacter butzleri)).